A 127-amino-acid chain; its full sequence is Protein ApaG (127 aa).

Residues 3–127 (NERKYSIKVE…FILSVPRVLH (125 aa)) form the ApaG domain.

The sequence is that of Protein ApaG from Nitrosomonas europaea (strain ATCC 19718 / CIP 103999 / KCTC 2705 / NBRC 14298).